A 279-amino-acid chain; its full sequence is Putative polysaccharide deacetylase YxkH (279 aa).

Residues Met1–Ala19 form the signal peptide. Cys20 is lipidated: N-palmitoyl cysteine. Cys20 carries S-diacylglycerol cysteine lipidation. Positions Gln29–Asp51 are disordered. Residues Ala34–Asp51 show a composition bias toward basic and acidic residues. In terms of domain architecture, NodB homology spans Lys119–Lys279.

This sequence belongs to the polysaccharide deacetylase family.

The protein resides in the cell membrane. This Bacillus subtilis (strain 168) protein is Putative polysaccharide deacetylase YxkH (yxkH).